Reading from the N-terminus, the 722-residue chain is Solute carrier organic anion transporter family member 4A1 (722 aa).

Residues 1-52 (MPLHQLGDKPLTFPSPNSAMENGLDHTPPSRRASPGTPLSPGSLRSAAHSPL) form a disordered region. At 1-103 (MPLHQLGDKP…PCLQVLNTPK (103 aa)) the chain is on the cytoplasmic side. The residue at position 34 (Ser34) is a Phosphoserine. At Thr37 the chain carries Phosphothreonine. 4 positions are modified to phosphoserine: Ser40, Ser43, Ser46, and Ser50. The helical transmembrane segment at 104 to 124 (GILFFLCAAAFLQGMTVNGFI) threads the bilayer. Over 125-143 (NTVITSLERRYDLHSYQSG) the chain is Extracellular. Residues 144–164 (LIASSYDIAACLCLTFVSYFG) traverse the membrane as a helical segment. Over 165–170 (GSGHKP) the chain is Cytoplasmic. A helical membrane pass occupies residues 171 to 195 (RWLGWGVLLMGTGSLVFALPHFTAG). Residues 196 to 222 (RYEVELDAGVRTCPANPGAVCADSTSG) lie on the Extracellular side of the membrane. Residues 223–253 (LSRYQLVFMLGQFLHGVGATPLYTLGVTYLD) form a helical membrane-spanning segment. Residues 254-272 (ENVKSSCSPVYIAIFYTAA) lie on the Cytoplasmic side of the membrane. The helical transmembrane segment at 273–293 (ILGPAAGYLIGGALLNIYTEM) threads the bilayer. Topologically, residues 294 to 307 (GRRTELTTESPLWV) are extracellular. A helical transmembrane segment spans residues 308-332 (GAWWVGFLGSGAAAFFTAVPILGYP). Over 333-378 (RQLPGSQRYAVMRAAEMHQLKDSSRGEASNPDFGKTIRDLPLSIWL) the chain is Cytoplasmic. A helical transmembrane segment spans residues 379–400 (LLKNPTFILLCLAGATEATLIT). At 401-420 (GMSTFSPKFLESQFSLSASE) the chain is on the extracellular side. The helical transmembrane segment at 421–444 (AATLFGYLVVPAGGGGTFLGGFFV) threads the bilayer. Over 445–448 (NKLR) the chain is Cytoplasmic. Residues 449–471 (LRGSAVIKFCLFCTVVSLLGILV) traverse the membrane as a helical segment. At 472–580 (FSLHCPSVPM…TSTCQRKPLL (109 aa)) the chain is on the extracellular side. A Kazal-like domain is found at 498–555 (LNLTAPCNAACSCQPEHYSPVCGSDGLMYFSLCHAGCPAATETNVDGQKVYRDCSCIP). N-linked (GlcNAc...) asparagine glycosylation is present at Asn499. 3 cysteine pairs are disulfide-bonded: Cys504–Cys534, Cys510–Cys530, and Cys519–Cys553. The N-linked (GlcNAc...) asparagine glycan is linked to Asn557. A helical membrane pass occupies residues 581–603 (LVFIFVVIFFTFLSSIPALTATL). Topologically, residues 604–612 (RCVRDPQRS) are cytoplasmic. A helical membrane pass occupies residues 613–638 (FALGIQWIVVRILGGIPGPIAFGWVI). The Extracellular segment spans residues 639-671 (DKACLLWQDQCGQQGSCLVYQNSAMSRYILIMG). A helical membrane pass occupies residues 672-689 (LLYKVLGVLFFAIACFLY). Over 690–722 (KPLSESSDGLETCLPSQSSAPDSATDSQLQSSV) the chain is Cytoplasmic. The segment at 703–722 (LPSQSSAPDSATDSQLQSSV) is disordered.

It belongs to the organo anion transporter (TC 2.A.60) family. Widely expressed. Expressed in placental trophoblasts. Expressed in pancreas, kidney, skeletal muscle, liver, lung, brain, heart, colon, small intestine, ovary, testis, prostate, thymus and spleen. In testis, primarily localized to Leydig cells.

It is found in the cell membrane. It catalyses the reaction 3,3',5-triiodo-L-thyronine(out) + L-glutamate(in) = 3,3',5-triiodo-L-thyronine(in) + L-glutamate(out). The enzyme catalyses L-thyroxine(out) + L-glutamate(in) = L-thyroxine(in) + L-glutamate(out). The catalysed reaction is estrone 3-sulfate(out) + L-glutamate(in) = estrone 3-sulfate(in) + L-glutamate(out). It carries out the reaction taurocholate(out) + L-glutamate(in) = taurocholate(in) + L-glutamate(out). It catalyses the reaction 3,3',5-triiodo-L-thyronine(out) = 3,3',5-triiodo-L-thyronine(in). The enzyme catalyses L-thyroxine(out) = L-thyroxine(in). The catalysed reaction is 3,3',5'-triiodo-L-thyronine(out) = 3,3',5'-triiodo-L-thyronine(in). It carries out the reaction estrone 3-sulfate(out) = estrone 3-sulfate(in). It catalyses the reaction 17beta-estradiol 17-O-(beta-D-glucuronate)(out) = 17beta-estradiol 17-O-(beta-D-glucuronate)(in). The enzyme catalyses taurocholate(out) = taurocholate(in). The catalysed reaction is prostaglandin E2(out) = prostaglandin E2(in). Organic anion antiporter with apparent broad substrate specificity. Recognizes various substrates including thyroid hormones 3,3',5-triiodo-L-thyronine (T3), L-thyroxine (T4) and 3,3',5'-triiodo-L-thyronine (rT3), conjugated steroids such as estrone 3-sulfate and estradiol 17-beta glucuronide, bile acids such as taurocholate and prostanoids such as prostaglandin E2, likely operating in a tissue-specific manner. May be involved in uptake of metabolites from the circulation into organs such as kidney, liver or placenta. Possibly drives the selective transport of thyroid hormones and estrogens coupled to an outward glutamate gradient across the microvillous membrane of the placenta. The transport mechanism, its electrogenicity and potential tissue-specific counterions remain to be elucidated. This is Solute carrier organic anion transporter family member 4A1 (SLCO4A1) from Homo sapiens (Human).